The following is a 2273-amino-acid chain: Acetyl-CoA carboxylase, mitochondrial (2273 aa).

The transit peptide at 1 to 104 directs the protein to the mitochondrion; it reads KGKTITHGQS…RGNIHKHTRL (104 aa). Positions 134–635 constitute a Biotin carboxylation domain; sequence VISKILIANN…STGWLDDLIL (502 aa). The 193-residue stretch at 292-484 folds into the ATP-grasp domain; the sequence is KTNFVSVPDD…LPATQLQIAM (193 aa). 332–337 contributes to the ATP binding site; it reads GGGGKG. Arginine 459 is a catalytic residue. The 75-residue stretch at 763–837 folds into the Biotinyl-binding domain; it reads LEAELNPTQV…EAGDVIAKLT (75 aa). Lysine 804 is subject to N6-biotinyllysine. In terms of domain architecture, CoA carboxyltransferase N-terminal spans 1532 to 1867; it reads PYSVKDWLQP…KRDMSPPLLE (336 aa). Residues 1532–2187 form a carboxyltransferase region; sequence PYSVKDWLQP…EGQVIKRLQK (656 aa). CoA-binding residues include arginine 1776, lysine 2080, and arginine 2082. The CoA carboxyltransferase C-terminal domain occupies 1871–2187; it reads RWDRDVDFKP…EGQVIKRLQK (317 aa).

Biotin is required as a cofactor.

It is found in the mitochondrion. The enzyme catalyses hydrogencarbonate + acetyl-CoA + ATP = malonyl-CoA + ADP + phosphate + H(+). The catalysed reaction is N(6)-biotinyl-L-lysyl-[protein] + hydrogencarbonate + ATP = N(6)-carboxybiotinyl-L-lysyl-[protein] + ADP + phosphate + H(+). The protein operates within lipid metabolism; malonyl-CoA biosynthesis; malonyl-CoA from acetyl-CoA: step 1/1. Its function is as follows. Catalyzes the rate-limiting reaction in the mitochondrial fatty acid synthesis (FAS) type II pathway. Responsible for the production of the mitochondrial malonyl-CoA, used for the biosynthesis of the cofactor lipoic acid. This protein carries three functions: biotin carboxyl carrier protein, biotin carboxylase, and carboxyltransferase. This is Acetyl-CoA carboxylase, mitochondrial (HFA1) from Saccharomyces cerevisiae (strain JAY291) (Baker's yeast).